Here is a 185-residue protein sequence, read N- to C-terminus: Elongation factor P (185 aa).

It belongs to the elongation factor P family.

The protein localises to the cytoplasm. Its pathway is protein biosynthesis; polypeptide chain elongation. Involved in peptide bond synthesis. Stimulates efficient translation and peptide-bond synthesis on native or reconstituted 70S ribosomes in vitro. Probably functions indirectly by altering the affinity of the ribosome for aminoacyl-tRNA, thus increasing their reactivity as acceptors for peptidyl transferase. The polypeptide is Elongation factor P (Syntrophomonas wolfei subsp. wolfei (strain DSM 2245B / Goettingen)).